The sequence spans 155 residues: Transcription antitermination protein NusB (155 aa).

This sequence belongs to the NusB family.

In terms of biological role, involved in transcription antitermination. Required for transcription of ribosomal RNA (rRNA) genes. Binds specifically to the boxA antiterminator sequence of the ribosomal RNA (rrn) operons. The sequence is that of Transcription antitermination protein NusB from Ralstonia pickettii (strain 12J).